Here is a 289-residue protein sequence, read N- to C-terminus: uncharacterized protein (289 aa).

The N-terminal stretch at 1–23 is a signal peptide; the sequence is MIKNYKLLLFTTFTLFFITFVSG. 4 N-linked (GlcNAc...) asparagine glycosylation sites follow: asparagine 74, asparagine 101, asparagine 132, and asparagine 285.

Its subcellular location is the secreted. This is an uncharacterized protein from Dictyostelium discoideum (Social amoeba).